Reading from the N-terminus, the 1976-residue chain is Myosin-10 (1976 aa).

Position 18 is an omega-N-methylarginine (arginine 18). One can recognise a Myosin N-terminal SH3-like domain in the interval 31 to 81 (TAKKLVWIPSERHGFEAASIKEERGDEVMVELAENGKKAMVNKDDIQKMNP). One can recognise a Myosin motor domain in the interval 85-783 (SKVEDMAELT…VLAHLEEERD (699 aa)). 178–185 (GESGAGKT) contributes to the ATP binding site. Leucine 214 carries the post-translational modification Phosphoserine. N6-acetyllysine is present on lysine 442. An actin-binding region spans residues 661–683 (LTKLMATLRNTNPNFVRCIIPNH). In terms of domain architecture, IQ spans 786–815 (ITDIIIFFQAVCRGYLARKAFAKKQQQLSA). Residues 845–1976 (LQVTRQEEEL…VNETQPPQSE (1132 aa)) are a coiled coil. Positions 1127–1147 (FESEKASRNKAEKQKRDLSEE) are disordered. Residues 1129–1147 (SEKASRNKAEKQKRDLSEE) are compositionally biased toward basic and acidic residues. Serine 1145 bears the Phosphoserine mark. An N6-acetyllysine mark is found at lysine 1241, lysine 1301, and lysine 1645. 2 disordered regions span residues 1697 to 1728 (ASSERARRHAEQERDELADEITNSASGKSALL) and 1872 to 1976 (MEKA…PQSE). The segment covering 1698–1708 (SSERARRHAEQ) has biased composition (basic and acidic residues). An Omega-N-methylarginine modification is found at arginine 1930. Phosphoserine occurs at positions 1935, 1937, 1938, and 1939. The residue at position 1940 (arginine 1940) is an Omega-N-methylarginine. A phosphoserine mark is found at serine 1952 and serine 1956. The residue at position 1960 (threonine 1960) is a Phosphothreonine. Residues 1967 to 1976 (VNETQPPQSE) show a composition bias toward polar residues. Serine 1975 bears the Phosphoserine mark.

This sequence belongs to the TRAFAC class myosin-kinesin ATPase superfamily. Myosin family. Myosin is a hexameric protein that consists of 2 heavy chain subunits (MHC), 2 alkali light chain subunits (MLC) and 2 regulatory light chain subunits (MLC-2). Interacts with PLEKHG6. Interacts with ECPAS. Interacts with KIF26B. Interacts with LARP6. Interacts with MCC. Interacts with CFAP95. As to quaternary structure, (Microbial infection) Interacts with herpes simplex virus 1/HHV-1 envelope glycoprotein B. Phosphorylated by ABL2. As to expression, isoform 1 is expressed in cerebellum and spinal chord. Isoform 2 is expressed in cerebrum and retina. Isoform 3 is expressed in the cerebrum and to a much lower extent in cerebellum.

The protein resides in the cell projection. It localises to the lamellipodium. It is found in the cell membrane. Its function is as follows. Cellular myosin that appears to play a role in cytokinesis, cell shape, and specialized functions such as secretion and capping. Involved with LARP6 in the stabilization of type I collagen mRNAs for CO1A1 and CO1A2. During cell spreading, plays an important role in cytoskeleton reorganization, focal contacts formation (in the central part but not the margins of spreading cells), and lamellipodial extension; this function is mechanically antagonized by MYH9. Functionally, (Microbial infection) Acts as a receptor for herpes simplex virus 1/HHV-1 envelope glycoprotein B. This Homo sapiens (Human) protein is Myosin-10 (MYH10).